The chain runs to 159 residues: Na(+)/H(+) antiporter subunit E1 (159 aa).

4 consecutive transmembrane segments (helical) span residues 1–21 (MAVQ…VTNS), 27–47 (FVLG…VLPG), 49–69 (FYVI…IELI), and 101–121 (WQIV…VLGV).

The protein belongs to the CPA3 antiporters (TC 2.A.63) subunit E family. As to quaternary structure, may form a heterooligomeric complex that consists of seven subunits: mnhA1, mnhB1, mnhC1, mnhD1, mnhE1, mnhF1 and mnhG1.

It is found in the cell membrane. Functionally, mnh complex is a Na(+)/H(+) antiporter involved in Na(+) excretion. The polypeptide is Na(+)/H(+) antiporter subunit E1 (mnhE1) (Staphylococcus aureus (strain Mu3 / ATCC 700698)).